A 79-amino-acid polypeptide reads, in one-letter code: Cytoinsectotoxin-3 (79 aa).

The protein belongs to the cationic peptide 06 (cytoinsectotoxin) family. Expressed by the venom gland.

The protein localises to the secreted. Functionally, insecticidal and antimicrobial peptide. Has insecticidal activity against larvae of flesh fly S.carnaria. Has antibacterial activity against Gram-positive bacterium B.subtilis B-501 (MIC=0.63 uM) and Gram-negative bacterium E.coli DH5alpha (MIC=2.5 uM). This chain is Cytoinsectotoxin-3, found in Lachesana tarabaevi (Spider).